The sequence spans 393 residues: Pyruvate dehydrogenase E1 component subunit alpha-2, mitochondrial (393 aa).

The transit peptide at 1–28 (MALSRLSSRSNTFLKPAITALPSSIRRH) directs the protein to the mitochondrion. Positions 94, 120, 121, 169, 171, 200, 201, 202, 229, and 231 each coordinate pyruvate. Positions 120, 121, 169, 171, 200, 201, 202, and 229 each coordinate thiamine diphosphate. Residue Asp-200 participates in Mg(2+) binding. Asn-229 and Tyr-231 together coordinate Mg(2+). His-295 is a binding site for thiamine diphosphate.

In terms of assembly, tetramer of 2 alpha and 2 beta subunits. Thiamine diphosphate is required as a cofactor. The cofactor is Mg(2+).

The protein localises to the mitochondrion matrix. The catalysed reaction is N(6)-[(R)-lipoyl]-L-lysyl-[protein] + pyruvate + H(+) = N(6)-[(R)-S(8)-acetyldihydrolipoyl]-L-lysyl-[protein] + CO2. Its activity is regulated as follows. E1 activity is regulated by phosphorylation (inactivation) and dephosphorylation (activation) of the alpha subunit. Functionally, the pyruvate dehydrogenase complex catalyzes the overall conversion of pyruvate to acetyl-CoA and CO(2). It contains multiple copies of three enzymatic components: pyruvate dehydrogenase (E1), dihydrolipoamide acetyltransferase (E2) and lipoamide dehydrogenase (E3). In Arabidopsis thaliana (Mouse-ear cress), this protein is Pyruvate dehydrogenase E1 component subunit alpha-2, mitochondrial (IAR4).